A 535-amino-acid polypeptide reads, in one-letter code: Sucrose transport protein SUT5 (535 aa).

At 1–53 (MEEGRRGDREGKSAAGWTALSTTKTTLEEKRRLQANGSVGGDAGTSGFRRIVR) the chain is on the cytoplasmic side. A helical membrane pass occupies residues 54-74 (LFFACMVAGGIQYGWALQLSL). The Extracellular segment spans residues 75–87 (LSPYSQTLGISHS). A helical membrane pass occupies residues 88 to 108 (YVSLTWICGPIAGFVVQPIVG). At 109 to 122 (YYSDRCTMKMGRRR) the chain is on the cytoplasmic side. The helical transmembrane segment at 123–143 (PFILVGCLIICISVMIIGFSA) threads the bilayer. At 144-163 (DIGRHLGDTKEHCSTYTGPR) the chain is on the extracellular side. A helical transmembrane segment spans residues 164–184 (WSAAMVYIVGFWFLDFANNTV). Over 185 to 203 (QGPARAMMADLSAGHHGPN) the chain is Cytoplasmic. The chain crosses the membrane as a helical span at residues 204 to 224 (VGQSIFSLWMAIGSVLGYLSG). The Extracellular segment spans residues 225–249 (ANGKWHEWFPWLKTAACCDACANLK). A helical membrane pass occupies residues 250–270 (GAFFTAVLLIVVSMTVTMYLA). The Cytoplasmic portion of the chain corresponds to 271–302 (DEMPLDKQDVDTSGGGGCAVFVDLFKSLRNLP). The chain crosses the membrane as a helical span at residues 303-323 (PAMFKVLAVTAVTWLSWFPFI). Residues 324 to 354 (QYNTDWMGREIYHGEPQGTAAKADVYDAGVR) are Extracellular-facing. The chain crosses the membrane as a helical span at residues 355 to 375 (EGAMGLLFCSVALGVTSFVIP). The Cytoplasmic segment spans residues 376–384 (KLCRRLTSK). Residues 385-405 (VVWSISNFLVFALMAVMVAVG) form a helical membrane-spanning segment. Residues 406–429 (MVSMRGYRPSLAAGLTGPDPTLKA) lie on the Extracellular side of the membrane. A helical membrane pass occupies residues 430–450 (VALVVFALIGIPQAVLFSVPW). Topologically, residues 451–465 (AVASEVTAEEGGGQG) are cytoplasmic. A helical membrane pass occupies residues 466–486 (LAIGVLNIAIVVPQLVIALTA). Topologically, residues 487–498 (GPIDGAFNKGNT) are extracellular. Residues 499–519 (PAFGIGGAFAFICGVLALIWL) form a helical membrane-spanning segment. Topologically, residues 520–535 (PKTRGVSNAAVVAGGH) are cytoplasmic.

The protein belongs to the glycoside-pentoside-hexuronide (GPH) cation symporter transporter (TC 2.A.2.4) family. In terms of assembly, homodimer. In terms of tissue distribution, widely expressed. Highest expression in sink leaves and lowest in germinating seeds.

It localises to the cell membrane. It functions in the pathway glycan biosynthesis; sucrose metabolism. Functionally, responsible for the transport of sucrose into the cell, with the concomitant uptake of protons (symport system). Can also transport other glucosides such as maltose, arbutin, salicin, helicin, alpha-phenylglucoside and beta-phenylglucoside. In Oryza sativa subsp. japonica (Rice), this protein is Sucrose transport protein SUT5 (SUT5).